The primary structure comprises 395 residues: Flagellin D (395 aa).

Belongs to the bacterial flagellin family.

It localises to the secreted. The protein localises to the bacterial flagellum. Functionally, flagellin is the subunit protein which polymerizes to form the filaments of bacterial flagella. The polypeptide is Flagellin D (flaD) (Rhizobium meliloti (Ensifer meliloti)).